Consider the following 166-residue polypeptide: Lipoprotein signal peptidase (166 aa).

The next 4 membrane-spanning stretches (helical) occupy residues 9–29 (ASGALAPWLGISLIVILFDQL), 45–65 (ALTSFFNLVLVYNRGAAFGFL), 71–91 (WQRWAFTALGVGATLVICFLL), and 100–120 (FSVSLALILGGALGNVIDRLV). Residues Asp-126 and Asp-144 contribute to the active site. Residues 135 to 155 (WHFPAFNLADSAITVGAVLLI) traverse the membrane as a helical segment.

Belongs to the peptidase A8 family.

The protein localises to the cell inner membrane. It carries out the reaction Release of signal peptides from bacterial membrane prolipoproteins. Hydrolyzes -Xaa-Yaa-Zaa-|-(S,diacylglyceryl)Cys-, in which Xaa is hydrophobic (preferably Leu), and Yaa (Ala or Ser) and Zaa (Gly or Ala) have small, neutral side chains.. It participates in protein modification; lipoprotein biosynthesis (signal peptide cleavage). Its function is as follows. This protein specifically catalyzes the removal of signal peptides from prolipoproteins. In Burkholderia cenocepacia (strain HI2424), this protein is Lipoprotein signal peptidase.